A 386-amino-acid chain; its full sequence is 23S rRNA (uracil(747)-C(5))-methyltransferase RlmC (386 aa).

C7, C15, C18, and C94 together coordinate [4Fe-4S] cluster. 4 residues coordinate S-adenosyl-L-methionine: Q219, F248, E269, and N316. Catalysis depends on C343, which acts as the Nucleophile.

This sequence belongs to the class I-like SAM-binding methyltransferase superfamily. RNA M5U methyltransferase family. RlmC subfamily.

It catalyses the reaction uridine(747) in 23S rRNA + S-adenosyl-L-methionine = 5-methyluridine(747) in 23S rRNA + S-adenosyl-L-homocysteine + H(+). In terms of biological role, catalyzes the formation of 5-methyl-uridine at position 747 (m5U747) in 23S rRNA. The polypeptide is 23S rRNA (uracil(747)-C(5))-methyltransferase RlmC (Shewanella oneidensis (strain ATCC 700550 / JCM 31522 / CIP 106686 / LMG 19005 / NCIMB 14063 / MR-1)).